A 468-amino-acid chain; its full sequence is MSGRNRSRSGTPSPKVTFKQESDGSDSESERRNGNRNGARPKNNNSRGSAPKPEKPKAAPPQNVSWFAPLVQTGKAELRFPRGEGVPVSQGVDSTYEHGYWLRTQRSFQKGGKQVLANPRWYFYYTGTGRFGDLRFGTKNPDIVWVGQEGANINRLGDMGTRNPSNDGAIPVQLAGGIPKGFYAEGRGSRGNSRSSSRNSSRASSRGNSRASSRGASPGRPAANPSTEPWMAYLVQKLERLESQVSGTKPATKNPVQVTKNEAAANAKKLRHKRTAHKGSGVTVNYGRRGPGDLEGNFGDREMIKLGTDDPRFAAAAQMAPNVSSFLFMSHLSTRDEDDALWLHYKGAIKLPKDDPNYEQWTKILAENLNAYKDFPPTEPKKDKKKKEETAQDTVIFEDASTGTDQTVVKVWVKDQDAQTDDEWLGGDETVYEDEDDRPKTQRRHKKRGSTASRVTIADPTNAGAERS.

The tract at residues 1 to 64 is disordered; sequence MSGRNRSRSG…KPKAAPPQNV (64 aa). Over residues 18–33 the composition is skewed to basic and acidic residues; it reads FKQESDGSDSESERRN. The interval 48–193 is RNA-binding; it reads GSAPKPEKPK…AEGRGSRGNS (146 aa). In terms of domain architecture, CoV N NTD spans 62–186; that stretch reads QNVSWFAPLV…GIPKGFYAEG (125 aa). The RNA site is built by Arg106, Arg120, and Arg162. Position 165 is a phosphoserine; by host (Ser165). Disordered regions lie at residues 181-228, 373-399, and 419-468; these read GFYA…PSTE, KDFPPTEPKKDKKKKEETAQDTVIFED, and QTDD…AERS. Low complexity predominate over residues 190–223; the sequence is RGNSRSSSRNSSRASSRGNSRASSRGASPGRPAA. A CoV N CTD domain is found at 259 to 376; it reads TKNEAAANAK…ENLNAYKDFP (118 aa). The segment at 270 to 373 is dimerization; that stretch reads LRHKRTAHKG…ILAENLNAYK (104 aa). Over residues 379–390 the composition is skewed to basic and acidic residues; sequence EPKKDKKKKEET. A compositionally biased stretch (acidic residues) spans 419-436; that stretch reads QTDDEWLGGDETVYEDED. Thr451 is modified (phosphothreonine; by host).

This sequence belongs to the betacoronavirus nucleocapsid protein family. Homooligomer. Both monomeric and oligomeric forms interact with RNA. Interacts with protein M. Interacts with NSP3; this interaction serves to tether the genome to the newly translated replicase-transcriptase complex at a very early stage of infection. ADP-ribosylated. The ADP-ribosylation is retained in the virion during infection. In terms of processing, phosphorylated on serine and threonine residues.

The protein resides in the virion. The protein localises to the host endoplasmic reticulum-Golgi intermediate compartment. It localises to the host Golgi apparatus. Its function is as follows. Packages the positive strand viral genome RNA into a helical ribonucleocapsid (RNP) and plays a fundamental role during virion assembly through its interactions with the viral genome and membrane protein M. Plays an important role in enhancing the efficiency of subgenomic viral RNA transcription as well as viral replication. In Rousettus leschenaultii (Leschenault's rousette), this protein is Nucleoprotein.